The following is a 291-amino-acid chain: Potassium-transporting ATPase subunit beta (291 aa).

Over 1-36 (MAALQEKKTCGQRMEEFQRYCWNPDTGQMLGRTLSR) the chain is Cytoplasmic. A helical; Signal-anchor for type II membrane protein membrane pass occupies residues 37 to 57 (WVWISLYYVAFYVVMTGLFAL). The Extracellular segment spans residues 58–291 (CLYVLMQTVD…KVEFKLKIEK (234 aa)). Residues Asn-99, Asn-103, Asn-130, Asn-146, and Asn-161 are each glycosylated (N-linked (GlcNAc...) asparagine). A disulfide bridge links Cys-131 with Cys-152. Cys-162 and Cys-178 form a disulfide bridge. 2 N-linked (GlcNAc...) asparagine glycosylation sites follow: Asn-193 and Asn-222. The segment at 194-291 (GSAPRVDCAF…KVEFKLKIEK (98 aa)) is immunoglobulin-like. The cysteines at positions 201 and 263 are disulfide-linked.

This sequence belongs to the X(+)/potassium ATPases subunit beta family. As to quaternary structure, the ATPase pump is composed of two subunits: alpha (catalytic) and beta (regulatory). Interacts with alpha subunit ATP12A; this interaction is required for the formation of a functionally active pump and targeting at the plasma membrane. Interacts (via N-terminus) with alpha subunit ATP4A (via the P-domain). Post-translationally, N-glycosylation is necessary for assembly and functional expression of the pump at the plasma membrane.

It is found in the apical cell membrane. The protein localises to the cell membrane. In terms of biological role, the beta subunit of the gastric H(+)/K(+) ATPase pump which transports H(+) ions in exchange for K(+) ions across the apical membrane of parietal cells. Plays a structural and regulatory role in the assembly and membrane targeting of a functionally active pump. Within a transport cycle, the transfer of a H(+) ion across the membrane is coupled to ATP hydrolysis and is associated with a transient phosphorylation of the alpha subunit that shifts the pump conformation from inward-facing (E1) to outward-facing state (E2). Interacts with the phosphorylation domain of the alpha subunit and functions as a ratchet, stabilizing the lumenal-open E2 conformation and preventing the reverse reaction of the transport cycle. The chain is Potassium-transporting ATPase subunit beta from Homo sapiens (Human).